The sequence spans 176 residues: Ribosome rescue factor SmrB (176 aa).

One can recognise a Smr domain in the interval 98–173; the sequence is LDVHGLNQDQ…RSTAILFLIH (76 aa).

It belongs to the SmrB family. Associates with collided ribosomes, but not with correctly translating polysomes.

In terms of biological role, acts as a ribosome collision sensor. Detects stalled/collided disomes (pairs of ribosomes where the leading ribosome is stalled and a second ribosome has collided with it) and endonucleolytically cleaves mRNA at the 5' boundary of the stalled ribosome. Stalled/collided disomes form a new interface (primarily via the 30S subunits) that binds SmrB. Cleaved mRNA becomes available for tmRNA ligation, leading to ribosomal subunit dissociation and rescue of stalled ribosomes. The protein is Ribosome rescue factor SmrB of Buchnera aphidicola subsp. Baizongia pistaciae (strain Bp).